The primary structure comprises 337 residues: Monoacylglycerol lipase ABHD6 (337 aa).

At M1–M8 the chain is on the extracellular side. The helical; Signal-anchor for type II membrane protein transmembrane segment at F9–L29 threads the bilayer. Topologically, residues W30 to N337 are cytoplasmic. The active-site Nucleophile is the S148. Active-site charge relay system residues include D278 and H306.

This sequence belongs to the AB hydrolase superfamily.

It localises to the late endosome membrane. The protein resides in the lysosome membrane. It is found in the mitochondrion membrane. The enzyme catalyses Hydrolyzes glycerol monoesters of long-chain fatty acids.. The catalysed reaction is 1-octanoylglycerol + H2O = octanoate + glycerol + H(+). It catalyses the reaction 1-decanoylglycerol + H2O = decanoate + glycerol + H(+). It carries out the reaction 1-dodecanoylglycerol + H2O = dodecanoate + glycerol + H(+). The enzyme catalyses 1-tetradecanoylglycerol + H2O = tetradecanoate + glycerol + H(+). The catalysed reaction is 2-hexadecanoylglycerol + H2O = glycerol + hexadecanoate + H(+). It catalyses the reaction 2-(9Z-octadecenoyl)-glycerol + H2O = glycerol + (9Z)-octadecenoate + H(+). It carries out the reaction 1-(9Z-octadecenoyl)-glycerol + H2O = glycerol + (9Z)-octadecenoate + H(+). The enzyme catalyses 2-(9Z,12Z-octadecadienoyl)-glycerol + H2O = (9Z,12Z)-octadecadienoate + glycerol + H(+). The catalysed reaction is 2-(5Z,8Z,11Z,14Z-eicosatetraenoyl)-glycerol + H2O = glycerol + (5Z,8Z,11Z,14Z)-eicosatetraenoate + H(+). It catalyses the reaction 1-(5Z,8Z,11Z,14Z-eicosatetraenoyl)-glycerol + H2O = glycerol + (5Z,8Z,11Z,14Z)-eicosatetraenoate + H(+). It carries out the reaction 1-(9Z,12Z-octadecadienoyl)-glycerol + H2O = (9Z,12Z)-octadecadienoate + glycerol + H(+). The enzyme catalyses 3-(9Z-octadecenoyl)-sn-glycero-1-phospho-(3'-(9Z-octadecenoyl)-1'-sn-glycerol) + H2O = 3-(9Z-octadecenoyl)-sn-glycero-1-phospho-(1'-sn-glycerol) + (9Z)-octadecenoate + H(+). The catalysed reaction is (S,S)-2-(9Z-octadecenoyl)-sn-glycero-1-phospho-(2'-(9Z-octadecenoyl)-1'-sn-glycerol) + H2O = (S,S)-2-(9Z-octadecenoyl)-sn-glycero-1-phospho-(1'-sn-glycerol) + (9Z)-octadecenoate + H(+). It catalyses the reaction (R,R)-2-(9Z-octadecenoyl)-sn-glycero-3-phospho-(2'-(9Z-octadecenoyl)-3'-sn-glycerol) + H2O = (R,R)-2-(9Z-octadecenoyl)-sn-glycero-3-phospho-(3'-sn-glycerol) + (9Z)-octadecenoate + H(+). Its function is as follows. Lipase that preferentially hydrolysis medium-chain saturated monoacylglycerols including 2-arachidonoylglycerol. Through 2-arachidonoylglycerol degradation may regulate endocannabinoid signaling pathways. Also has a lysophosphatidyl lipase activity with a preference for lysophosphatidylglycerol among other lysophospholipids. Also able to degrade bis(monoacylglycero)phosphate (BMP) and constitutes the major enzyme for BMP catabolism. BMP, also known as lysobisphosphatidic acid, is enriched in late endosomes and lysosomes and plays a key role in the formation of intraluminal vesicles and in lipid sorting. This chain is Monoacylglycerol lipase ABHD6, found in Rattus norvegicus (Rat).